The primary structure comprises 189 residues: MDKNGEIVEKIKDEKSINQNLDFLRNYRDSYNRTPLMVACMLGMENAIDKLVENFDKLEDKDIEGSTALIWAVKNNRLGIAEKLLSKGSNVNTKDFSGKTPLMWSIIFGYSEMSYFLLEHGANVNDRNLEGETPLIVASKYGRSEIVKKLLELGADISARDLTGLTAEASARIFGRQEVIKIFTEVRRA.

ANK repeat units follow at residues 31–60 (YNRT…KLED), 64–93 (EGST…NVNT), 97–126 (SGKT…NVND), and 130–159 (EGET…DISA).

In Thermoplasma volcanium (strain ATCC 51530 / DSM 4299 / JCM 9571 / NBRC 15438 / GSS1), this protein is Putative ankyrin repeat protein TV1425.